We begin with the raw amino-acid sequence, 153 residues long: Large ribosomal subunit protein uL22 (153 aa).

This sequence belongs to the universal ribosomal protein uL22 family. Part of the 50S ribosomal subunit.

In terms of biological role, this protein binds specifically to 23S rRNA. It makes multiple contacts with different domains of the 23S rRNA in the assembled 50S subunit and ribosome. Functionally, the globular domain of the protein is located near the polypeptide exit tunnel on the outside of the subunit, while an extended beta-hairpin is found that lines the wall of the exit tunnel in the center of the 70S ribosome. The polypeptide is Large ribosomal subunit protein uL22 (Methanococcus maripaludis (strain DSM 14266 / JCM 13030 / NBRC 101832 / S2 / LL)).